The chain runs to 518 residues: Glutamate--cysteine ligase (518 aa).

The protein belongs to the glutamate--cysteine ligase type 1 family. Type 1 subfamily.

It carries out the reaction L-cysteine + L-glutamate + ATP = gamma-L-glutamyl-L-cysteine + ADP + phosphate + H(+). The protein operates within sulfur metabolism; glutathione biosynthesis; glutathione from L-cysteine and L-glutamate: step 1/2. The chain is Glutamate--cysteine ligase from Escherichia coli O8 (strain IAI1).